A 57-amino-acid chain; its full sequence is Large ribosomal subunit protein bL32c (57 aa).

This sequence belongs to the bacterial ribosomal protein bL32 family.

It localises to the plastid. Its subcellular location is the chloroplast. The polypeptide is Large ribosomal subunit protein bL32c (Drimys granadensis).